Here is a 572-residue protein sequence, read N- to C-terminus: MKTVVLLTWISCWIDVCTSAQGRYAQKLLNDLMENYSSALRPVEDTDKTLNVTLQITLSQIKDMDERNQVLTTYLWIRQTWFDAYLKWDKEEYDGLEVIRIPSNLVWRPDIVLYNKADEEASGPADTNVVLRYNGEITWDMPAITKSSCVVDVSYFPFDWQWCNLTFGSWTYNGNQVDIAMGMDSGDLSDFVENVEWECHGMPAVRNVIMYGCCSDPYPDITYTLHLKRRSLFYIFNLLLPCFLISFLAPLGFYLPADSGEKVSLGVTVLLALTVFQLMVAESMPPSESVPYIGKYYIATMTMITASTSLTIFIMNIHFCGAEAKPVPHWAKVLIIDYMSKILFVYEVGENCTTPESERTPLYSEEPMSGNSALARNHYHDDLYHDGGCYQDDCHRLRPYQYGNGHLQNHHSTHQNHLDNCRYANGGHRDDHYSNRSNQNHHSNRSQTSKGEGGEEKREPLRHYHHIGREELDYQAPPPGNLQNGGLNEPLPYPKEKHLNPASAPACSCPCPHHKQVVYNIQYIANCFREQRATCAKGAEWKKVAKVMDRFFMWIFFIMVFLMSILIIGKAT.

The first 19 residues, 1–19, serve as a signal peptide directing secretion; that stretch reads MKTVVLLTWISCWIDVCTS. The Extracellular segment spans residues 20–232; it reads AQGRYAQKLL…YTLHLKRRSL (213 aa). Asn51 is a glycosylation site (N-linked (GlcNAc...) asparagine). Residues Cys149 and Cys163 are joined by a disulfide bond. Residue Asn164 is glycosylated (N-linked (GlcNAc...) asparagine). A disulfide bridge links Cys213 with Cys214. The next 3 membrane-spanning stretches (helical) occupy residues 233 to 253, 263 to 283, and 297 to 317; these read FYIFNLLLPCFLISFLAPLGF, VSLGVTVLLALTVFQLMVAES, and YIATMTMITASTSLTIFIMNI. Topologically, residues 318-550 are cytoplasmic; it reads HFCGAEAKPV…WKKVAKVMDR (233 aa). The disordered stretch occupies residues 405–458; sequence GHLQNHHSTHQNHLDNCRYANGGHRDDHYSNRSNQNHHSNRSQTSKGEGGEEKR. Residues 435-447 show a composition bias toward low complexity; sequence NRSNQNHHSNRSQ. Residues 551-571 form a helical membrane-spanning segment; that stretch reads FFMWIFFIMVFLMSILIIGKA.

The protein belongs to the ligand-gated ion channel (TC 1.A.9) family. Acetylcholine receptor (TC 1.A.9.1) subfamily. Expressed in the liver, olfactory mucosa, pituitary gland, hair cells of the saccule and spleen.

Its subcellular location is the postsynaptic cell membrane. The protein localises to the cell membrane. The chain is Neuronal acetylcholine receptor subunit alpha-9-I (nachra9) from Oncorhynchus mykiss (Rainbow trout).